We begin with the raw amino-acid sequence, 93 residues long: RNA-binding protein Hfq (93 aa).

One can recognise a Sm domain in the interval Asp-9 to Pro-68. The span at Pro-74 to Ala-86 shows a compositional bias: low complexity. Positions Pro-74–Gln-93 are disordered.

Belongs to the Hfq family. Homohexamer.

In terms of biological role, RNA chaperone that binds small regulatory RNA (sRNAs) and mRNAs to facilitate mRNA translational regulation in response to envelope stress, environmental stress and changes in metabolite concentrations. Also binds with high specificity to tRNAs. In Alcanivorax borkumensis (strain ATCC 700651 / DSM 11573 / NCIMB 13689 / SK2), this protein is RNA-binding protein Hfq.